Consider the following 153-residue polypeptide: DNA gyrase inhibitor 1 (153 aa).

It belongs to the DNA gyrase inhibitor family. In terms of assembly, interacts with DNA gyrase.

Its subcellular location is the cytoplasm. Its function is as follows. Inhibits the supercoiling activity of DNA gyrase. Acts by inhibiting DNA gyrase at an early step, prior to (or at the step of) binding of DNA by the gyrase. It protects cells against toxins that target DNA gyrase, by inhibiting activity of these toxins and reducing the formation of lethal double-strand breaks in the cell. The polypeptide is DNA gyrase inhibitor 1 (Dickeya dadantii (strain 3937) (Erwinia chrysanthemi (strain 3937))).